The primary structure comprises 73 residues: Translation initiation factor IF-1 (73 aa).

In terms of domain architecture, S1-like spans 1–73 (MAKKEDTIVL…TKARVVYRHR (73 aa)).

The protein belongs to the IF-1 family. As to quaternary structure, component of the 30S ribosomal translation pre-initiation complex which assembles on the 30S ribosome in the order IF-2 and IF-3, IF-1 and N-formylmethionyl-tRNA(fMet); mRNA recruitment can occur at any time during PIC assembly.

The protein localises to the cytoplasm. In terms of biological role, one of the essential components for the initiation of protein synthesis. Stabilizes the binding of IF-2 and IF-3 on the 30S subunit to which N-formylmethionyl-tRNA(fMet) subsequently binds. Helps modulate mRNA selection, yielding the 30S pre-initiation complex (PIC). Upon addition of the 50S ribosomal subunit IF-1, IF-2 and IF-3 are released leaving the mature 70S translation initiation complex. This chain is Translation initiation factor IF-1, found in Chlamydia muridarum (strain MoPn / Nigg).